The chain runs to 191 residues: Elongation factor P (191 aa).

This sequence belongs to the elongation factor P family.

It localises to the cytoplasm. The protein operates within protein biosynthesis; polypeptide chain elongation. Its function is as follows. Involved in peptide bond synthesis. Stimulates efficient translation and peptide-bond synthesis on native or reconstituted 70S ribosomes in vitro. Probably functions indirectly by altering the affinity of the ribosome for aminoacyl-tRNA, thus increasing their reactivity as acceptors for peptidyl transferase. This Bartonella tribocorum (strain CIP 105476 / IBS 506) protein is Elongation factor P.